The primary structure comprises 252 residues: Isoprenyl transferase (252 aa).

Residue aspartate 28 is part of the active site. Aspartate 28 contacts Mg(2+). Substrate-binding positions include 29–32 (GNGR), tryptophan 33, arginine 41, histidine 45, and 73–75 (STE). Asparagine 76 functions as the Proton acceptor in the catalytic mechanism. Residues tryptophan 77, arginine 79, arginine 200, and 206 to 208 (RLS) contribute to the substrate site. Glutamate 219 lines the Mg(2+) pocket.

The protein belongs to the UPP synthase family. Homodimer. Mg(2+) is required as a cofactor.

Its function is as follows. Catalyzes the condensation of isopentenyl diphosphate (IPP) with allylic pyrophosphates generating different type of terpenoids. This chain is Isoprenyl transferase, found in Streptococcus pneumoniae serotype 4 (strain ATCC BAA-334 / TIGR4).